The primary structure comprises 342 residues: N-acetyl-gamma-glutamyl-phosphate reductase (342 aa).

Cys-149 is a catalytic residue.

It belongs to the NAGSA dehydrogenase family. Type 1 subfamily.

It localises to the cytoplasm. The enzyme catalyses N-acetyl-L-glutamate 5-semialdehyde + phosphate + NADP(+) = N-acetyl-L-glutamyl 5-phosphate + NADPH + H(+). Its pathway is amino-acid biosynthesis; L-arginine biosynthesis; N(2)-acetyl-L-ornithine from L-glutamate: step 3/4. Catalyzes the NADPH-dependent reduction of N-acetyl-5-glutamyl phosphate to yield N-acetyl-L-glutamate 5-semialdehyde. This is N-acetyl-gamma-glutamyl-phosphate reductase from Paracoccus denitrificans (strain Pd 1222).